We begin with the raw amino-acid sequence, 334 residues long: Ketol-acid reductoisomerase (NADP(+)) (334 aa).

The region spanning 1–181 (MTTVYYDQDV…GATRAGVIET (181 aa)) is the KARI N-terminal Rossmann domain. Residues 25–28 (YGSQ), Arg-48, Ser-52, and 82–85 (DEIQ) each bind NADP(+). Residue His-107 is part of the active site. Position 133 (Gly-133) interacts with NADP(+). Residues 182-327 (TFKEETETDL…RELREMMPFI (146 aa)) enclose the KARI C-terminal knotted domain. 4 residues coordinate Mg(2+): Asp-190, Glu-194, Glu-226, and Glu-230. A substrate-binding site is contributed by Ser-251.

It belongs to the ketol-acid reductoisomerase family. Requires Mg(2+) as cofactor.

It catalyses the reaction (2R)-2,3-dihydroxy-3-methylbutanoate + NADP(+) = (2S)-2-acetolactate + NADPH + H(+). The catalysed reaction is (2R,3R)-2,3-dihydroxy-3-methylpentanoate + NADP(+) = (S)-2-ethyl-2-hydroxy-3-oxobutanoate + NADPH + H(+). It participates in amino-acid biosynthesis; L-isoleucine biosynthesis; L-isoleucine from 2-oxobutanoate: step 2/4. The protein operates within amino-acid biosynthesis; L-valine biosynthesis; L-valine from pyruvate: step 2/4. In terms of biological role, involved in the biosynthesis of branched-chain amino acids (BCAA). Catalyzes an alkyl-migration followed by a ketol-acid reduction of (S)-2-acetolactate (S2AL) to yield (R)-2,3-dihydroxy-isovalerate. In the isomerase reaction, S2AL is rearranged via a Mg-dependent methyl migration to produce 3-hydroxy-3-methyl-2-ketobutyrate (HMKB). In the reductase reaction, this 2-ketoacid undergoes a metal-dependent reduction by NADPH to yield (R)-2,3-dihydroxy-isovalerate. The polypeptide is Ketol-acid reductoisomerase (NADP(+)) (Staphylococcus aureus (strain Mu3 / ATCC 700698)).